Consider the following 422-residue polypeptide: uncharacterized protein (422 aa).

Positions Met1–Ser22 are disordered. The span at Lys7–Ser22 shows a compositional bias: low complexity.

This is an uncharacterized protein from Acanthamoeba polyphaga mimivirus (APMV).